The chain runs to 322 residues: tRNA dimethylallyltransferase (322 aa).

Residue 12-19 (GPTAAGKT) coordinates ATP. Residue 14–19 (TAAGKT) coordinates substrate. Interaction with substrate tRNA stretches follow at residues 37–40 (DSAL) and 160–164 (QRLIR).

This sequence belongs to the IPP transferase family. In terms of assembly, monomer. The cofactor is Mg(2+).

The enzyme catalyses adenosine(37) in tRNA + dimethylallyl diphosphate = N(6)-dimethylallyladenosine(37) in tRNA + diphosphate. Its function is as follows. Catalyzes the transfer of a dimethylallyl group onto the adenine at position 37 in tRNAs that read codons beginning with uridine, leading to the formation of N6-(dimethylallyl)adenosine (i(6)A). This is tRNA dimethylallyltransferase from Pseudomonas putida (Arthrobacter siderocapsulatus).